A 767-amino-acid polypeptide reads, in one-letter code: MSHAVTIEEPQAQPQVSQTRYRERSRAGSHISSNRAYDFLYDPLFIVSSEKDHTQANIQATLIRSRLRKVPRFKTMFSNLIHYPRYSLYWSKSDPVPPFISREWKGHKEKHREALRQLTTTDASFQMPKEVYEDPEVTGKNRYKYFERPFLPFFQQMPFNVVYAVSKAEPYTFPPTSTKHLSIPSKSTVGTQTDYRDADVQTDPYSAEYVVCQDSIPELLTLATLTWGRGLPAGQAEVEMIERAREKRAWEASLPALSDTSQFEKRRKMMNEMERKEWAFREQEIEKLQEIRLEVLKELLRKREENQNEVNMKHLNARWSKLQEGKEAKMAKIQRTHVSTIRKLVGKRKNIEGKLERRNIIKDYSDYASQVYGPLSRLGCFPDNNSEDFVVKNYYLNTYEGLVELESCLPDFVTQPQIRAPKPKVITTKAGFLKRAARLDYELAEVHKALLDKKNKVLEVKKPPRFLQRNPIPQPRLPTPTLEMTSNEEEEMEMAVIYLQKLLRGRVVQNMMFEGKEKRLELIQELRTCHALQEDEKLVKKAEKQVTLALQRQRNLHEHKVSLVENHLAGLEGRALADMFDFLSKELVRLQEERRIHAFVMLAERQRRVREAEESGRRQVEKQRLREEDEIFKEVVKVHHSTISSYLEDIILNTEANTAEEQARAEIEKMAEKINDIAYEMESRRTYLQSEEIVAELVYSFLIPEVQKYFVKEKVRNAQRKHILAAHQIIHSYTESMVQKKLTEGEQDEASNAAMLLEKETQNENNS.

The segment at 1–29 is disordered; sequence MSHAVTIEEPQAQPQVSQTRYRERSRAGS.

Belongs to the CFAP91 family. Interacts with MYCBP and AKAP1. Part of a complex containing MYCBP, AKAP1 and PRKAR2B. Interacts with CFAP61. In terms of assembly, does not interact with MYCBP. Post-translationally, phosphorylated by PKA. As to expression, strongly expressed in the liver. In terms of tissue distribution, widely expressed, but strongly expressed in all spermatogenesis-related tissues, including the testis, the epithelium of cauda and the corpus epididymis, as well as the spermatid and mature sperm. Also expressed in Leydig cells.

It localises to the mitochondrion. Its subcellular location is the cytoplasm. The protein localises to the cytoskeleton. The protein resides in the cilium axoneme. Its function is as follows. Involved in sperm flagellum axonemal organization and function. May regulate cilium motility through its role in the assembly of the axonemal radial spokes. The sequence is that of Cilia- and flagella-associated protein 91 from Homo sapiens (Human).